An 82-amino-acid chain; its full sequence is Sec-independent protein translocase protein TatA (82 aa).

The helical transmembrane segment at 1-21 threads the bilayer; the sequence is MGGISIWQLLIIAVIIVLLFG. Residues 48–82 are disordered; the sequence is SAKDAKKDADFVPQNLEKKEAETVEKQKQNDKEQA.

Belongs to the TatA/E family. As to quaternary structure, the Tat system comprises two distinct complexes: a TatABC complex, containing multiple copies of TatA, TatB and TatC subunits, and a separate TatA complex, containing only TatA subunits. Substrates initially bind to the TatABC complex, which probably triggers association of the separate TatA complex to form the active translocon.

It localises to the cell inner membrane. Part of the twin-arginine translocation (Tat) system that transports large folded proteins containing a characteristic twin-arginine motif in their signal peptide across membranes. TatA could form the protein-conducting channel of the Tat system. The chain is Sec-independent protein translocase protein TatA from Aliivibrio salmonicida (strain LFI1238) (Vibrio salmonicida (strain LFI1238)).